The following is a 752-amino-acid chain: Peptidyl-prolyl cis-trans isomerase G (752 aa).

The 166-residue stretch at 11-176 (FFDIAINNQP…AEVRILSCGE (166 aa)) folds into the PPIase cyclophilin-type domain. Over residues 182-193 (KVKKEEKKRHKS) the composition is skewed to basic residues. Positions 182–752 (KVKKEEKKRH…SPGTDEDKSG (571 aa)) are disordered. The segment covering 194-214 (SSSSSSSDSDSSSDSQSSSES) has biased composition (low complexity). Residues 226 to 251 (RKRKKKHRKNSRKHKKEKKKRKKSKK) are compositionally biased toward basic residues. 5 positions are modified to phosphoserine: Ser-252, Ser-254, Ser-255, Ser-257, and Ser-288. Residues 290–308 (PKADDKERKNREREREREC) show a composition bias toward basic and acidic residues. Ser-313 bears the Phosphoserine mark. Residues 327–345 (SGRKIKGRGPRRYRTPSRS) are compositionally biased toward basic residues. 2 stretches are compositionally biased toward basic and acidic residues: residues 346 to 366 (RSRD…EMQR) and 377 to 447 (RWIK…DKYN). At Ser-354 the chain carries Phosphoserine. At Thr-356 the chain carries Phosphothreonine. Ser-384 carries the phosphoserine modification. Lys-390 participates in a covalent cross-link: Glycyl lysine isopeptide (Lys-Gly) (interchain with G-Cter in SUMO2). Ser-395, Ser-411, and Ser-413 each carry phosphoserine. The segment covering 448–461 (KNKVKKRGKSKSRS) has biased composition (basic residues). Composition is skewed to basic and acidic residues over residues 462–552 (KSKE…DLTK) and 577–598 (RSHD…QEYR). Basic residues predominate over residues 599 to 625 (RRGRSRSRDRRTPGRSRSKDRRRRRRD). A compositionally biased stretch (basic and acidic residues) spans 626–684 (SRSSEREESQSRNKDKYRSQESKSSHRKENSEGEKRTYSKSRDHNSSSNNREKKADREQ). Ser-685 and Ser-688 each carry phosphoserine. Polar residues predominate over residues 685–705 (SPVSKTKQSSQDNEVKSSTLK). A Glycyl lysine isopeptide (Lys-Gly) (interchain with G-Cter in SUMO2) cross-link involves residue Lys-691. Ser-694, Ser-742, and Ser-743 each carry phosphoserine. A compositionally biased stretch (basic and acidic residues) spans 706–752 (NQEDEKTRSPVEKENQKSKGQENDHVHDKNKKCDHESSPGTDEDKSG). At Thr-746 the chain carries Phosphothreonine. Ser-751 is subject to Phosphoserine.

Interacts with CLK1, PNN and with the phosphorylated C-terminal domain of RNA polymerase II.

It is found in the nucleus matrix. It localises to the nucleus speckle. It catalyses the reaction [protein]-peptidylproline (omega=180) = [protein]-peptidylproline (omega=0). With respect to regulation, inhibited by cyclosporin A (CsA). Its function is as follows. PPIase that catalyzes the cis-trans isomerization of proline imidic peptide bonds in oligopeptides and may therefore assist protein folding. May be implicated in the folding, transport, and assembly of proteins. May play an important role in the regulation of pre-mRNA splicing. This chain is Peptidyl-prolyl cis-trans isomerase G (Ppig), found in Mus musculus (Mouse).